A 315-amino-acid polypeptide reads, in one-letter code: beta-hydroxyaspartate dehydratase (315 aa).

An N6-(pyridoxal phosphate)lysine modification is found at Lys53. Pyridoxal 5'-phosphate contacts are provided by residues Asn80, 179–183 (GGGGM), and Thr303.

Requires pyridoxal 5'-phosphate as cofactor.

It carries out the reaction (3S)-3-hydroxy-D-aspartate = iminosuccinate + H2O. Functionally, catalyzes the dehydration of (2R,3S)-beta-hydroxyaspartate ((3S)-3-hydroxy-D-aspartate) into iminosuccinate. Is essential for the growth of P.denitrificans in the presence of glycolate and glyoxylate since it functions in glyoxylate assimilation via the beta-hydroxyaspartate cycle (BHAC). This is beta-hydroxyaspartate dehydratase from Paracoccus denitrificans (strain Pd 1222).